A 64-amino-acid chain; its full sequence is MMTLEADSVNVQALDMGHIVVDIDGVNITELINKAAENGYSLRVVDDRDSTETPATYASPHQLL.

This is an uncharacterized protein from Escherichia coli O157:H7.